Consider the following 176-residue polypeptide: Sperm-egg fusion protein TMEM95 (176 aa).

Residues 1–16 (MWRLALGGVFLAAAQA) form the signal peptide. 4 disulfides stabilise this stretch: Cys17-Cys118, Cys20-Cys121, Cys105-Cys128, and Cys109-Cys134. Over 17-145 (CVFCRLPAHD…PGSQDLWEAK (129 aa)) the chain is Extracellular. The chain crosses the membrane as a helical span at residues 146–166 (ILLLSIFGAFLLLGVLSLLVE). Topologically, residues 167–176 (SHHLQAKSGL) are cytoplasmic.

It belongs to the TMEM95 family. In terms of assembly, does not interact with sperm-egg fusion proteins IZUMO1 or IZUMO1R/JUNO. Post-translationally, N-glycosylated. As to expression, spermatozoa (at protein level).

The protein resides in the cytoplasmic vesicle. It is found in the secretory vesicle. Its subcellular location is the acrosome membrane. Its function is as follows. Sperm protein required for fusion of sperm with the egg membrane during fertilization. This is Sperm-egg fusion protein TMEM95 from Homo sapiens (Human).